The sequence spans 277 residues: Large ribosomal subunit protein uL2 (277 aa).

Positions glycine 222 to lysine 277 are disordered.

Belongs to the universal ribosomal protein uL2 family. Part of the 50S ribosomal subunit. Forms a bridge to the 30S subunit in the 70S ribosome.

Functionally, one of the primary rRNA binding proteins. Required for association of the 30S and 50S subunits to form the 70S ribosome, for tRNA binding and peptide bond formation. It has been suggested to have peptidyltransferase activity; this is somewhat controversial. Makes several contacts with the 16S rRNA in the 70S ribosome. This chain is Large ribosomal subunit protein uL2, found in Rhodopseudomonas palustris (strain BisB18).